The sequence spans 450 residues: Hydrolase ffsE (450 aa).

Serine 266 acts as the Nucleophile in catalysis.

Belongs to the AB hydrolase superfamily. FUS2 hydrolase family. As to quaternary structure, homodimer.

Its pathway is mycotoxin biosynthesis. In terms of biological role, hydrolase; part of the gene cluster that mediates the biosynthesis of the cytotoxic leucine-containing cytochalasans, including aspochalasin C, aspochalasin E, TMC-169, flavichalasine F, aspergillin PZ, aspochalasin M and flavichalasine G. The first step in the pathway is catalyzed by the hybrid PKS-NRPS ffsA that utilizes 8 units of malonyl-CoA to iteratively assemble the octaketide chain before addition of L-leucine by the C-terminal NRPS modules. Because ffsA lacks a designated enoylreductase (ER) domain, the required activity is provided the enoyl reductase fssC. The methyltransferase (MT) domain of ffsA catalyzes the alpha-methylation at C10 and C14 using S-adenosyl-L-methionine as the methyl-donating cosubstrate. Reduction by the hydrolyase ffsE, followed by dehydration and intra-molecular Diels-Alder cyclization by the Diels-Alderase ffsF then yield the required isoindolone-fused macrocycle. A number of oxidative steps catalyzed by the tailoring cytochrome P450 monooxygenase ffsD, the FAD-linked oxidoreductase ffsJ and the short-chain dehydrogenase/reductase ffsI, are further required to afford the final products. This is Hydrolase ffsE from Aspergillus flavipes.